Reading from the N-terminus, the 136-residue chain is Autophagy-related protein 41 (136 aa).

The segment at glutamine 127–valine 136 is ATG9-binding.

In terms of assembly, interacts with ATG9.

It localises to the preautophagosomal structure membrane. Its function is as follows. Involved in both selective and non-selective autophagy. Does not appear to play a role in determining the size of autophagosomes, but rather influences their formation rate. With ATG9, plays a role in the delivery of donor membrane to expanding phagophore. The chain is Autophagy-related protein 41 from Saccharomyces cerevisiae (strain ATCC 204508 / S288c) (Baker's yeast).